The following is a 207-amino-acid chain: Probable RNA 2'-phosphotransferase (207 aa).

This sequence belongs to the KptA/TPT1 family.

Functionally, removes the 2'-phosphate from RNA via an intermediate in which the phosphate is ADP-ribosylated by NAD followed by a presumed transesterification to release the RNA and generate ADP-ribose 1''-2''-cyclic phosphate (APPR&gt;P). May function as an ADP-ribosylase. In Methanosarcina barkeri (strain Fusaro / DSM 804), this protein is Probable RNA 2'-phosphotransferase.